We begin with the raw amino-acid sequence, 365 residues long: N5-carboxyaminoimidazole ribonucleotide synthase (365 aa).

Residues Arg93, Lys132, 137 to 143, 168 to 171, Glu176, His199, and 249 to 250 contribute to the ATP site; these read GYDGKGQ, EEFV, and NE. An ATP-grasp domain is found at 97-279; that stretch reads KLFLKKHGFP…QFENLLRAIT (183 aa).

Belongs to the PurK/PurT family. Homodimer.

It carries out the reaction 5-amino-1-(5-phospho-beta-D-ribosyl)imidazole + hydrogencarbonate + ATP = 5-carboxyamino-1-(5-phospho-D-ribosyl)imidazole + ADP + phosphate + 2 H(+). Its pathway is purine metabolism; IMP biosynthesis via de novo pathway; 5-amino-1-(5-phospho-D-ribosyl)imidazole-4-carboxylate from 5-amino-1-(5-phospho-D-ribosyl)imidazole (N5-CAIR route): step 1/2. In terms of biological role, catalyzes the ATP-dependent conversion of 5-aminoimidazole ribonucleotide (AIR) and HCO(3)(-) to N5-carboxyaminoimidazole ribonucleotide (N5-CAIR). This chain is N5-carboxyaminoimidazole ribonucleotide synthase, found in Aquifex aeolicus (strain VF5).